The primary structure comprises 876 residues: Alanine--tRNA ligase (876 aa).

At Lys74 the chain carries N6-acetyllysine. Zn(2+) is bound by residues His564, His568, Cys666, and His670.

It belongs to the class-II aminoacyl-tRNA synthetase family. Homotetramer. Zn(2+) is required as a cofactor.

The protein localises to the cytoplasm. It catalyses the reaction tRNA(Ala) + L-alanine + ATP = L-alanyl-tRNA(Ala) + AMP + diphosphate. Catalyzes the attachment of alanine to tRNA(Ala) in a two-step reaction: alanine is first activated by ATP to form Ala-AMP and then transferred to the acceptor end of tRNA(Ala). Also edits incorrectly charged Ser-tRNA(Ala) and Gly-tRNA(Ala) via its editing domain. The protein is Alanine--tRNA ligase of Escherichia coli O157:H7.